Here is a 191-residue protein sequence, read N- to C-terminus: Small ribosomal subunit protein eS7 (191 aa).

The protein belongs to the eukaryotic ribosomal protein eS7 family.

This Hordeum vulgare (Barley) protein is Small ribosomal subunit protein eS7 (RPS7).